The sequence spans 441 residues: Deoxyguanosinetriphosphate triphosphohydrolase-like protein 1 (441 aa).

The region spanning 62–255 (RLTHSLEAAQ…MELADDIAYG (194 aa)) is the HD domain.

The protein belongs to the dGTPase family. Type 2 subfamily.

The sequence is that of Deoxyguanosinetriphosphate triphosphohydrolase-like protein 1 from Vibrio cholerae serotype O1 (strain ATCC 39315 / El Tor Inaba N16961).